The chain runs to 50 residues: Cytochrome c oxidase subunit 4 (50 aa).

Residues 2 to 17 (ASHHEITDHKHGEMDI) lie on the Cytoplasmic side of the membrane. The helical transmembrane segment at 18 to 49 (RHQQATFAGFIKGATWVSILSIAVLVFLALAN) threads the bilayer. A topological domain (periplasmic) is located at residue Ser-50.

The protein resides in the cell inner membrane. The enzyme catalyses 4 Fe(II)-[cytochrome c] + O2 + 8 H(+)(in) = 4 Fe(III)-[cytochrome c] + 2 H2O + 4 H(+)(out). Its function is as follows. Not required for enzymatic activity or proton pumping of the cytochrome c oxidase complex. This chain is Cytochrome c oxidase subunit 4 (ctaH), found in Paracoccus denitrificans.